A 733-amino-acid polypeptide reads, in one-letter code: MTSENPDVLLSRVINVVRAASSLASQDVDFYKNLDRGFSKDLKSKADKLADMANEIILSIDEHHESFELKEEDISDLWNNFGNIMDNLLEMSDHSLDKLNCAINSKSRGSDLQYLGEFSGKNFSPTKRVEKPQLKFKSPIDNSESHPFIPLLKEKPNALKPLSESLRLVDDDENNPSHYPHPYEYEIDHQEYSPEILQIREEIPSKSWDDSVPIWVDTSTELESMLEDLKNTKEIAVDLEHHDYRSYYGIVCLMQISTRERDYLVDTLKLRENLHILNEVFTNPSIVKVFHGAFMDIIWLQRDLGLYVVGLFDTYHASKAIGLPRHSLAYLLENFANFKTSKKYQLADWRIRPLSKPMTAYARADTHFLLNIYDQLRNKLIESNKLAGVLYESRNVAKRRFEYSKYRPLTPSSEVYSPIEKESPWKILMYQYNIPPEREVLVRELYQWRDLIARRDDESPRFVMPNQLLAALVAYTPTDVIGVVSLTNGVTEHVRQNAKLLANLIRDALRNIKNTNEEATPIPSSETKADGILLETISVPQIRDVMERFSVLCNSNISKSRAKPVTNSSILLGKILPREEHDIAYSKDGLPNKVKTEDIRIRAQNFKSALANLEDIIFEIEKPLVVPVKLEEIKTVDPASAPNHSPEIDNLDDLVVLKKKNIQKKQPAKEKGVTEKDAVDYSKIPNILSNKPGQNNRQQKKRRFDPSSSDSNGPRAAKKRRPAAKGKNLSFKR.

The residue at position 138 (serine 138) is a Phosphoserine. The 3'-5' exonuclease domain occupies 214–380 (IWVDTSTELE…NIYDQLRNKL (167 aa)). The Mn(2+) site is built by aspartate 238 and glutamate 240. Aspartate 238 and glutamate 240 together coordinate Zn(2+). The AMP site is built by glutamate 240 and histidine 241. UMP-binding residues include glutamate 240 and histidine 241. Position 296 (aspartate 296) interacts with Mn(2+). Positions 299, 342, and 345 each coordinate AMP. Residues tryptophan 299, lysine 342, and glutamine 345 each coordinate UMP. Residue aspartate 365 participates in Mn(2+) binding. Aspartate 365 serves as a coordination point for Zn(2+). The HRDC domain maps to 435 to 515 (PPEREVLVRE…RDALRNIKNT (81 aa)). At threonine 520 the chain carries Phosphothreonine. Phosphoserine occurs at positions 640 and 645. Residues 662 to 733 (IQKKQPAKEK…AKGKNLSFKR (72 aa)) form a disordered region. The segment covering 667–680 (PAKEKGVTEKDAVD) has biased composition (basic and acidic residues). Polar residues predominate over residues 687-697 (ILSNKPGQNNR). Short sequence motifs (nuclear localization signal) lie at residues 700–704 (KKRRF) and 718–721 (KKRR). Basic residues predominate over residues 716–733 (AAKKRRPAAKGKNLSFKR).

The protein belongs to the exosome component 10/RRP6 family. As to quaternary structure, component of the RNA exosome complex. Specifically part of the catalytically inactive RNA exosome core complex (Exo-9) which may associate with the catalytic subunits RRP6 and DIS3 in cytoplasmic- and nuclear-specific RNA exosome complex forms. Exo-9 is formed by a hexameric base ring of RNase PH domain-containing subunits and a cap ring consisting of CSL4, RRP4 and RRP40. RRP6 specifically is part of the nuclear form of the RNA exosome complex; the association appears to be mediated by Exo-9 and not by DIS3. Interacts with LRP1. Interacts with NPL3, NOP53 and PAP1.

The protein localises to the nucleus. Its subcellular location is the nucleolus. Functionally, nuclear-specific catalytic component of the RNA exosome complex which has 3'-&gt;5' exoribonuclease activity and participates in a multitude of cellular RNA processing and degradation events. In the nucleus, the RNA exosome complex is involved in proper maturation of stable RNA species such as rRNA, snRNA and snoRNA, in the elimination of RNA processing by-products and non-coding 'pervasive' transcripts, such as antisense RNA species and cryptic unstable transcripts (CUTs), and of mRNAs with processing defects, thereby limiting or excluding their export to the cytoplasm. The catalytic inactive RNA exosome core complex of 9 subunits (Exo-9) is proposed to play a pivotal role in the binding and presentation of RNA for ribonucleolysis, and to serve as a scaffold for the association with catalytic subunits and accessory proteins or complexes. RRP6 has 3'-5' exonuclease activity which is not modulated upon association with Exo-9 suggesting that the complex inner RNA-binding path is not used to access its active site. The protein is Exosome complex exonuclease RRP6 (RRP6) of Saccharomyces cerevisiae (strain ATCC 204508 / S288c) (Baker's yeast).